Consider the following 343-residue polypeptide: Protein RecA (343 aa).

Belongs to the RecA family.

The protein localises to the cytoplasm. Its function is as follows. Can catalyze the hydrolysis of ATP in the presence of single-stranded DNA, the ATP-dependent uptake of single-stranded DNA by duplex DNA, and the ATP-dependent hybridization of homologous single-stranded DNAs. It interacts with LexA causing its activation and leading to its autocatalytic cleavage. This is Protein RecA from Coxiella burnetii (strain RSA 493 / Nine Mile phase I).